Consider the following 923-residue polypeptide: Transportin-3 (923 aa).

An N-acetylmethionine modification is found at Met1. Ser74 is subject to Phosphoserine. Phosphothreonine is present on residues His242 and Thr896.

In terms of assembly, interacts with (GTP-bound) Ran. Interacts with (phosphorylated) SFRS1 and SFRS2; leading to their nuclear import. Interacts with NUP62. Interacts with RBM4. Interacts with CPSF6, promoting its nuclear import.

Its subcellular location is the nucleus envelope. It is found in the cytoplasm. Its function is as follows. Importin, which transports target proteins into the nucleus. Specifically mediates the nuclear import of splicing factor serine/arginine (SR) proteins, such as RBM4, SFRS1 and SFRS2, by recognizing phosphorylated SR domains. Also mediates the nuclear import of serine/arginine (SR) protein CPSF6, independently of CPSF6 phosphorylation. The nuclear import process is regulated by the small GTPase Ran that partitions between cytoplasm and nucleus in the predominantly GDP- and GTP-bound form, respectively. Importin associates with target cargo proteins in the cytoplasm, and the competitive binding of GTP-bound Ran induces the release of cargos in the nucleus. This chain is Transportin-3, found in Mus musculus (Mouse).